Here is a 284-residue protein sequence, read N- to C-terminus: MKQKVVSIGDIKVANDLPFVLFGGMNVLESRDLAMRICEHYVTVTQKLGIPYVFKASFDKANRSSIHSYRGPGLEEGMKIFQEIKQAFGVKIITDVHEASQAQTVADVVDVIQLPAFLARQTDLVEAMAKTGAVINVKKPQFVSPGQMGNIVDKFAEGGNENVILCDRGANFGYDNLVVDMLGFNVMKQVSNNSPVIFDVTHALQCRDPMGAASSGRRGQVSELARAGMAVGIAGLFIEAHPDPANAKCDGPSALPLDKLEPFLLQMKAIDDLVKSFPELDTNS.

Belongs to the KdsA family.

Its subcellular location is the cytoplasm. It carries out the reaction D-arabinose 5-phosphate + phosphoenolpyruvate + H2O = 3-deoxy-alpha-D-manno-2-octulosonate-8-phosphate + phosphate. It functions in the pathway carbohydrate biosynthesis; 3-deoxy-D-manno-octulosonate biosynthesis; 3-deoxy-D-manno-octulosonate from D-ribulose 5-phosphate: step 2/3. Its pathway is bacterial outer membrane biogenesis; lipopolysaccharide biosynthesis. This Erwinia tasmaniensis (strain DSM 17950 / CFBP 7177 / CIP 109463 / NCPPB 4357 / Et1/99) protein is 2-dehydro-3-deoxyphosphooctonate aldolase.